The chain runs to 254 residues: Adenosylcobinamide-GDP ribazoletransferase (254 aa).

Helical transmembrane passes span 36–56 (YYPL…TLLL), 61–81 (PLVT…GIHL), 114–134 (ALSA…LLAL), 138–158 (LVPY…LIGV), 197–217 (WVLQ…ILLF), and 232–252 (LYGA…FPLL).

It belongs to the CobS family. Requires Mg(2+) as cofactor.

Its subcellular location is the cell membrane. The enzyme catalyses alpha-ribazole + adenosylcob(III)inamide-GDP = adenosylcob(III)alamin + GMP + H(+). It carries out the reaction alpha-ribazole 5'-phosphate + adenosylcob(III)inamide-GDP = adenosylcob(III)alamin 5'-phosphate + GMP + H(+). It functions in the pathway cofactor biosynthesis; adenosylcobalamin biosynthesis; adenosylcobalamin from cob(II)yrinate a,c-diamide: step 7/7. Its function is as follows. Joins adenosylcobinamide-GDP and alpha-ribazole to generate adenosylcobalamin (Ado-cobalamin). Also synthesizes adenosylcobalamin 5'-phosphate from adenosylcobinamide-GDP and alpha-ribazole 5'-phosphate. The polypeptide is Adenosylcobinamide-GDP ribazoletransferase (Desulfitobacterium hafniense (strain Y51)).